The sequence spans 523 residues: uncharacterized protein (523 aa).

Residues 193-447 form the Radical SAM core domain; sequence RKCSGCGNCR…ALKRRMIGKR (255 aa). [4Fe-4S] cluster-binding residues include Cys-212, Cys-220, and Cys-223.

The cofactor is [4Fe-4S] cluster.

This is an uncharacterized protein from Methanopyrus kandleri (strain AV19 / DSM 6324 / JCM 9639 / NBRC 100938).